The chain runs to 76 residues: uncharacterized protein (76 aa).

The chain crosses the membrane as a helical span at residues 20–42 (GIVWGPKLAPWGITLGLGAFYFF).

It localises to the membrane. This is an uncharacterized protein from Dictyostelium discoideum (Social amoeba).